A 1040-amino-acid chain; its full sequence is ATPase family AAA domain-containing protein 2 (1040 aa).

Residues 1–11 (MSLLKMRRHAI) are compositionally biased toward basic residues. The disordered stretch occupies residues 1–30 (MSLLKMRRHAIHSSDSTSSSSSEDDCFERR). Position 65 is a phosphoserine (Ser65). 122-129 (GPPGTGKT) is a binding site for ATP. Residues Ser401 and Ser406 each carry the phosphoserine modification. Coiled-coil stretches lie at residues 619–643 (LTAEEVKRLEEQEEDTFRELRIFLR) and 735–761 (YAIIKEELDEDFEQLCEEIQESRKKRG). A Bromo domain is found at 629 to 741 (EQEEDTFREL…DTAYAIIKEE (113 aa)). The interval 772 to 799 (YHVMPKQNSPPVGDKKPDQEQNEKLKVP) is disordered. Glycyl lysine isopeptide (Lys-Gly) (interchain with G-Cter in SUMO2) cross-links involve residues Lys777 and Lys797. A compositionally biased stretch (basic and acidic residues) spans 784-797 (GDKKPDQEQNEKLK). Phosphothreonine occurs at positions 801 and 825. Basic residues predominate over residues 811 to 833 (LKRKFHKKSKWHVGTKIKRRKIS). Positions 811–935 (LKRKFHKKSK…SQVTDIPEDS (125 aa)) are disordered. A compositionally biased stretch (polar residues) spans 835-848 (AKDNSLNAMNSSSR). A phosphoserine mark is found at Ser849, Ser883, and Ser891. Composition is skewed to basic and acidic residues over residues 849 to 863 (SDTEDSQHTHAEHTE) and 874 to 885 (ESDKQNRLESNI). Over residues 901–919 (EEPKETTEGTELRKDRIVC) the composition is skewed to basic and acidic residues. A Phosphoserine modification is found at Ser951. Residue Thr972 is modified to Phosphothreonine.

This sequence belongs to the AAA ATPase family. Interacts with ESR1 and NCOA3 and these interactions are enhanced by estradiol. Interacts with acetylated lysine residues on histone H1.4, H2A, H2B and H3 (in vitro).

It is found in the nucleus. The catalysed reaction is ATP + H2O = ADP + phosphate + H(+). Functionally, may be a transcriptional coactivator of the nuclear receptor ESR1 required to induce the expression of a subset of estradiol target genes, such as CCND1, MYC and E2F1. May play a role in the recruitment or occupancy of CREBBP at some ESR1 target gene promoters. May be required for histone hyperacetylation. The chain is ATPase family AAA domain-containing protein 2 (Atad2) from Mus musculus (Mouse).